A 480-amino-acid chain; its full sequence is Cytochrome P450 724B1 (480 aa).

Residues 6–26 traverse the membrane as a helical segment; that stretch reads LVLAALVILLALLLTLVLSHF. Cys426 is a heme binding site.

Belongs to the cytochrome P450 family. Heme is required as a cofactor. As to expression, ubiquitously expressed at low levels, but preferentially in the internodes and the florets before flowering.

The protein localises to the membrane. It carries out the reaction campesterol + reduced [NADPH--hemoprotein reductase] + O2 = (22S)-22-hydroxycampesterol + oxidized [NADPH--hemoprotein reductase] + H2O + H(+). Its pathway is plant hormone biosynthesis; brassinosteroid biosynthesis. Involved in brassinosteroid biosynthesis. May catalyze a C6-oxidation step and may be involved to supply 6-deoxotyphasterol and typhasterol. Involved in internode elongation and seed development. Catalyzes the conversion of campesterol (CR) to (22S)-22-hydroxycampesterol (22-OHCR, 22-hydroxyCR). In Oryza sativa subsp. japonica (Rice), this protein is Cytochrome P450 724B1.